We begin with the raw amino-acid sequence, 306 residues long: Glutaminase (306 aa).

Substrate-binding residues include S64, N115, E159, N166, Y190, Y242, and V260.

The protein belongs to the glutaminase family. As to quaternary structure, homotetramer.

It catalyses the reaction L-glutamine + H2O = L-glutamate + NH4(+). This chain is Glutaminase, found in Aeromonas hydrophila subsp. hydrophila (strain ATCC 7966 / DSM 30187 / BCRC 13018 / CCUG 14551 / JCM 1027 / KCTC 2358 / NCIMB 9240 / NCTC 8049).